Here is a 328-residue protein sequence, read N- to C-terminus: D-cysteine desulfhydrase (328 aa).

K51 carries the post-translational modification N6-(pyridoxal phosphate)lysine.

Belongs to the ACC deaminase/D-cysteine desulfhydrase family. As to quaternary structure, homodimer. Requires pyridoxal 5'-phosphate as cofactor.

It carries out the reaction D-cysteine + H2O = hydrogen sulfide + pyruvate + NH4(+) + H(+). Functionally, catalyzes the alpha,beta-elimination reaction of D-cysteine and of several D-cysteine derivatives. It could be a defense mechanism against D-cysteine. In Shigella boydii serotype 18 (strain CDC 3083-94 / BS512), this protein is D-cysteine desulfhydrase.